The chain runs to 103 residues: Large ribosomal subunit protein bL21 (103 aa).

Belongs to the bacterial ribosomal protein bL21 family. In terms of assembly, part of the 50S ribosomal subunit. Contacts protein L20.

In terms of biological role, this protein binds to 23S rRNA in the presence of protein L20. This chain is Large ribosomal subunit protein bL21, found in Mycolicibacterium paratuberculosis (strain ATCC BAA-968 / K-10) (Mycobacterium paratuberculosis).